A 575-amino-acid polypeptide reads, in one-letter code: Estrogen receptor beta (575 aa).

The modulating stretch occupies residues 1–160; sequence MSSSLSPTLQ…GAVVKRDMHF (160 aa). The tract at residues 108-151 is disordered; the sequence is DTKPHTSGRHSSFLSRPKLFGKRPEDGDGDEALDDDDPSSSSSG. The span at 134–145 shows a compositional bias: acidic residues; sequence GDGDEALDDDDP. NR C4-type zinc fingers lie at residues 161-181 and 197-221; these read CVVC…CEGC and CPAT…LRKC. A DNA-binding region (nuclear receptor) is located at residues 161–226; sequence CVVCHDYASG…RLRKCYEMGM (66 aa). In terms of domain architecture, NR LBD spans 290-526; that stretch reads SPEQLVYCIL…DLLLEMLDAN (237 aa). A compositionally biased stretch (polar residues) spans 537 to 549; it reads VCTDPVTPATSPN. Positions 537–557 are disordered; the sequence is VCTDPVTPATSPNTPLPPQLH.

The protein belongs to the nuclear hormone receptor family. NR3 subfamily. In terms of assembly, binds DNA as a homodimer. Can form a heterodimer with ER-alpha. In terms of tissue distribution, ovary and testis.

Its subcellular location is the nucleus. In terms of biological role, binds estrogens with an affinity similar to that of ER-alpha, and activates expression of reporter genes containing estrogen response elements (ERE) in an estrogen-dependent manner. The polypeptide is Estrogen receptor beta (esr2) (Ictalurus punctatus (Channel catfish)).